A 423-amino-acid polypeptide reads, in one-letter code: Adenylosuccinate synthetase (423 aa).

GTP is bound by residues 12–18 and 40–42; these read GDEGKGK and GHT. The active-site Proton acceptor is Asp-13. Residues Asp-13 and Gly-40 each coordinate Mg(2+). IMP contacts are provided by residues 13 to 16, 38 to 41, Thr-128, Arg-142, Gln-223, Thr-238, and Arg-302; these read DEGK and NAGH. The Proton donor role is filled by His-41. 298 to 304 is a binding site for substrate; it reads TTTGRPR. Residues Arg-304, 330-332, and 412-414 contribute to the GTP site; these read RLD and CIG.

The protein belongs to the adenylosuccinate synthetase family. In terms of assembly, homodimer. Mg(2+) is required as a cofactor.

The protein localises to the cytoplasm. It catalyses the reaction IMP + L-aspartate + GTP = N(6)-(1,2-dicarboxyethyl)-AMP + GDP + phosphate + 2 H(+). The protein operates within purine metabolism; AMP biosynthesis via de novo pathway; AMP from IMP: step 1/2. In terms of biological role, plays an important role in the de novo pathway of purine nucleotide biosynthesis. Catalyzes the first committed step in the biosynthesis of AMP from IMP. This is Adenylosuccinate synthetase from Dehalococcoides mccartyi (strain ATCC BAA-2100 / JCM 16839 / KCTC 5957 / BAV1).